The primary structure comprises 180 residues: Cytokinin-beta-glucosidase 2 (180 aa).

Its function is as follows. Hydrolyzes cytokinin glucosides thus liberating free cytokinins. The sequence is that of Cytokinin-beta-glucosidase 2 (ROLC2) from Linaria vulgaris (Toadflax).